The primary structure comprises 458 residues: MPWSVLEALRNNPELLIESMKKRCKDPQPVYEAIRVDEEWRKTLQEVERLRHEHNKITREVAKAKDKAEREALIKKAKELLALKEELEKKLKELEAKREEILLSLPNLVHPSVPEGCDEDHNVPVRFWGKPKVWKGHLEEFEKQTKRWGFEVEHEVVEEKPVGHADMLEKVLRLGNTYKAAQVASSRFYYLFKDLVWLDYALMMYAMDFLSKKGFVLVEPPYMVRYKVLRGVIDVETFKDAIYKIEGEDLYLIATSEHPLAAYKMEEIIDESELPIKLAGVSPCFRKEAGAGNRDLKGIFRVHQFHKVEQFVFSKPEDSWEVLEELIRNAEELVKGLELPYRVVNVCGGELGSPAAKKYDLEVWYPAQGKYRELVSASNCTDWQSYRLKIRYRIKGGKKHDFVHTLNSTALATTRTITAILENHQLPDGRVRIPRALRKYLEPFESAPKDYIEPWTGI.

255 to 257 (TSE) contributes to the L-serine binding site. Residues 286 to 288 (RKE) and Val302 contribute to the ATP site. Glu309 is a binding site for L-serine. 373–376 (ELVS) lines the ATP pocket. Thr409 provides a ligand contact to L-serine.

It belongs to the class-II aminoacyl-tRNA synthetase family. Type-1 seryl-tRNA synthetase subfamily. In terms of assembly, homodimer. The tRNA molecule binds across the dimer.

The protein localises to the cytoplasm. It carries out the reaction tRNA(Ser) + L-serine + ATP = L-seryl-tRNA(Ser) + AMP + diphosphate + H(+). The enzyme catalyses tRNA(Sec) + L-serine + ATP = L-seryl-tRNA(Sec) + AMP + diphosphate + H(+). It functions in the pathway aminoacyl-tRNA biosynthesis; selenocysteinyl-tRNA(Sec) biosynthesis; L-seryl-tRNA(Sec) from L-serine and tRNA(Sec): step 1/1. Its function is as follows. Catalyzes the attachment of serine to tRNA(Ser). Is also able to aminoacylate tRNA(Sec) with serine, to form the misacylated tRNA L-seryl-tRNA(Sec), which will be further converted into selenocysteinyl-tRNA(Sec). This Ignicoccus hospitalis (strain KIN4/I / DSM 18386 / JCM 14125) protein is Serine--tRNA ligase.